The sequence spans 124 residues: Small ribosomal subunit protein uS12c (124 aa).

The tract at residues 104–124 (SGGVKDRTQRRSKYGVKKPKS) is disordered. Over residues 113–124 (RRSKYGVKKPKS) the composition is skewed to basic residues.

This sequence belongs to the universal ribosomal protein uS12 family. In terms of assembly, part of the 30S ribosomal subunit.

The protein localises to the plastid. It localises to the chloroplast. Functionally, with S4 and S5 plays an important role in translational accuracy. Located at the interface of the 30S and 50S subunits. The polypeptide is Small ribosomal subunit protein uS12c (rps12) (Thalassiosira pseudonana (Marine diatom)).